A 388-amino-acid polypeptide reads, in one-letter code: Chorismate synthase (388 aa).

NADP(+) is bound by residues Arg39 and Arg45. FMN contacts are provided by residues 130 to 132, 251 to 252, Gly296, 311 to 315, and Arg337; these read RSS, NA, and KPIPT.

Belongs to the chorismate synthase family. As to quaternary structure, homotetramer. Requires FMNH2 as cofactor.

It carries out the reaction 5-O-(1-carboxyvinyl)-3-phosphoshikimate = chorismate + phosphate. It functions in the pathway metabolic intermediate biosynthesis; chorismate biosynthesis; chorismate from D-erythrose 4-phosphate and phosphoenolpyruvate: step 7/7. In terms of biological role, catalyzes the anti-1,4-elimination of the C-3 phosphate and the C-6 proR hydrogen from 5-enolpyruvylshikimate-3-phosphate (EPSP) to yield chorismate, which is the branch point compound that serves as the starting substrate for the three terminal pathways of aromatic amino acid biosynthesis. This reaction introduces a second double bond into the aromatic ring system. This Streptococcus pyogenes serotype M6 (strain ATCC BAA-946 / MGAS10394) protein is Chorismate synthase.